An 80-amino-acid polypeptide reads, in one-letter code: SPbeta prophage-derived uncharacterized HTH-type transcriptional regulator YotL (80 aa).

One can recognise an HTH cro/C1-type domain in the interval 12–67 (LNELMHEYSVSIEDLVECTGLSKQRINDYVGGFKSNMNIGTAMTFADAIGCSIEEL). A DNA-binding region (H-T-H motif) is located at residues 23–42 (IEDLVECTGLSKQRINDYVG).

This Bacillus subtilis (strain 168) protein is SPbeta prophage-derived uncharacterized HTH-type transcriptional regulator YotL (yotL).